Reading from the N-terminus, the 489-residue chain is Lysine--tRNA ligase (489 aa).

Residues Glu-399 and Glu-406 each contribute to the Mg(2+) site.

This sequence belongs to the class-II aminoacyl-tRNA synthetase family. In terms of assembly, homodimer. Requires Mg(2+) as cofactor.

The protein localises to the cytoplasm. It carries out the reaction tRNA(Lys) + L-lysine + ATP = L-lysyl-tRNA(Lys) + AMP + diphosphate. This chain is Lysine--tRNA ligase, found in Synechococcus sp. (strain CC9311).